A 247-amino-acid chain; its full sequence is Probable 2-phosphosulfolactate phosphatase (247 aa).

Belongs to the ComB family. The cofactor is Mg(2+).

The catalysed reaction is (2R)-O-phospho-3-sulfolactate + H2O = (2R)-3-sulfolactate + phosphate. This chain is Probable 2-phosphosulfolactate phosphatase, found in Clostridium perfringens (strain SM101 / Type A).